Here is a 219-residue protein sequence, read N- to C-terminus: MPKAFLIDTTRCTACRGCQLACKEWHDLPANVTKQRGSHQNPPDLNPNNLKIVRFNERMNEKGVVIWNFFPDQCRHCVTPVCVDVADMAVPGAMIKDKKTGAVLATEKSAKLSPADAKAVAEACPYNIPRIDPKTKRITKCDMCFDRVSAGMQPICVKTCPTGTMAFGERDEMLALAEKRLADAKTRFPKAHLVDVEDVSVIYLLAEEKEHYYEYAGFM.

Residues 3-32 (KAFLIDTTRCTACRGCQLACKEWHDLPANV) form the 4Fe-4S ferredoxin-type 1 domain. Positions 12, 15, 18, 22, 74, 77, 82, 124, 141, 144, 156, and 160 each coordinate [4Fe-4S] cluster. The 4Fe-4S ferredoxin-type 2 domain occupies 132 to 171 (DPKTKRITKCDMCFDRVSAGMQPICVKTCPTGTMAFGERD).

As to quaternary structure, heterotrimer of cytochrome c3 FDH2C and formate dehydrogenase FDH2 alpha and beta subunits that forms the FdhABC(3) complex. Requires [4Fe-4S] cluster as cofactor.

The protein resides in the periplasm. Functionally, beta chain of the formate dehydrogenase (FDH) that catalyzes the reversible two-electron oxidation of formate to carbon dioxide. The beta chain is an electron transfer unit. This Nitratidesulfovibrio vulgaris (strain ATCC 29579 / DSM 644 / CCUG 34227 / NCIMB 8303 / VKM B-1760 / Hildenborough) (Desulfovibrio vulgaris) protein is Formate dehydrogenase 2 subunit beta (cytochrome c-553).